Reading from the N-terminus, the 426-residue chain is Serine hydroxymethyltransferase (426 aa).

(6S)-5,6,7,8-tetrahydrofolate is bound by residues Leu-113 and Gly-117–Leu-119. Lys-222 bears the N6-(pyridoxal phosphate)lysine mark. Ser-363–Phe-365 contributes to the (6S)-5,6,7,8-tetrahydrofolate binding site.

The protein belongs to the SHMT family. In terms of assembly, homodimer. Requires pyridoxal 5'-phosphate as cofactor.

Its subcellular location is the cytoplasm. It catalyses the reaction (6R)-5,10-methylene-5,6,7,8-tetrahydrofolate + glycine + H2O = (6S)-5,6,7,8-tetrahydrofolate + L-serine. Its pathway is one-carbon metabolism; tetrahydrofolate interconversion. It functions in the pathway amino-acid biosynthesis; glycine biosynthesis; glycine from L-serine: step 1/1. Its function is as follows. Catalyzes the reversible interconversion of serine and glycine with tetrahydrofolate (THF) serving as the one-carbon carrier. This reaction serves as the major source of one-carbon groups required for the biosynthesis of purines, thymidylate, methionine, and other important biomolecules. Also exhibits THF-independent aldolase activity toward beta-hydroxyamino acids, producing glycine and aldehydes, via a retro-aldol mechanism. This is Serine hydroxymethyltransferase from Porphyromonas gingivalis (strain ATCC 33277 / DSM 20709 / CIP 103683 / JCM 12257 / NCTC 11834 / 2561).